Here is a 147-residue protein sequence, read N- to C-terminus: Nucleoside diphosphate kinase (147 aa).

ATP contacts are provided by K9, F57, R85, T91, R102, and N112. H115 functions as the Pros-phosphohistidine intermediate in the catalytic mechanism.

The protein belongs to the NDK family. Requires Mg(2+) as cofactor.

The protein resides in the cytoplasm. The enzyme catalyses a 2'-deoxyribonucleoside 5'-diphosphate + ATP = a 2'-deoxyribonucleoside 5'-triphosphate + ADP. It carries out the reaction a ribonucleoside 5'-diphosphate + ATP = a ribonucleoside 5'-triphosphate + ADP. In terms of biological role, major role in the synthesis of nucleoside triphosphates other than ATP. The ATP gamma phosphate is transferred to the NDP beta phosphate via a ping-pong mechanism, using a phosphorylated active-site intermediate. This Ignicoccus hospitalis (strain KIN4/I / DSM 18386 / JCM 14125) protein is Nucleoside diphosphate kinase.